The chain runs to 451 residues: Ribosomal protein uS12 methylthiotransferase RimO (451 aa).

The 111-residue stretch at 17 to 127 folds into the MTTase N-terminal domain; that stretch reads PTIGFVSLGC…VLAQVHEHLP (111 aa). [4Fe-4S] cluster-binding residues include C26, C62, C91, C160, C164, and C167. Residues 146–383 form the Radical SAM core domain; it reads LTPRHYAYLK…MQLQQRISTE (238 aa). A TRAM domain is found at 386-451; it reads KQKVGQTLPV…DEYDLWGTRV (66 aa).

Belongs to the methylthiotransferase family. RimO subfamily. It depends on [4Fe-4S] cluster as a cofactor.

Its subcellular location is the cytoplasm. It catalyses the reaction L-aspartate(89)-[ribosomal protein uS12]-hydrogen + (sulfur carrier)-SH + AH2 + 2 S-adenosyl-L-methionine = 3-methylsulfanyl-L-aspartate(89)-[ribosomal protein uS12]-hydrogen + (sulfur carrier)-H + 5'-deoxyadenosine + L-methionine + A + S-adenosyl-L-homocysteine + 2 H(+). Functionally, catalyzes the methylthiolation of an aspartic acid residue of ribosomal protein uS12. This is Ribosomal protein uS12 methylthiotransferase RimO from Cellvibrio japonicus (strain Ueda107) (Pseudomonas fluorescens subsp. cellulosa).